The sequence spans 383 residues: Lipid-A-disaccharide synthase (383 aa).

This sequence belongs to the LpxB family.

It carries out the reaction 2-N,3-O-bis[(3R)-3-hydroxytetradecanoyl]-alpha-D-glucosaminyl 1-phosphate + UDP-2-N,3-O-bis[(3R)-3-hydroxytetradecanoyl]-alpha-D-glucosamine = lipid A disaccharide (E. coli) + UDP + H(+). The enzyme catalyses a lipid X + a UDP-2-N,3-O-bis[(3R)-3-hydroxyacyl]-alpha-D-glucosamine = a lipid A disaccharide + UDP + H(+). It functions in the pathway glycolipid biosynthesis; lipid IV(A) biosynthesis; lipid IV(A) from (3R)-3-hydroxytetradecanoyl-[acyl-carrier-protein] and UDP-N-acetyl-alpha-D-glucosamine: step 5/6. In terms of biological role, condensation of UDP-2,3-diacylglucosamine and 2,3-diacylglucosamine-1-phosphate to form lipid A disaccharide, a precursor of lipid A, a phosphorylated glycolipid that anchors the lipopolysaccharide to the outer membrane of the cell. This is Lipid-A-disaccharide synthase from Klebsiella pneumoniae (strain 342).